We begin with the raw amino-acid sequence, 164 residues long: Glycine cleavage system H protein, mitochondrial (164 aa).

The N-terminal 34 residues, 1–34, are a transit peptide targeting the mitochondrion; it reads MALRLWASSAANALKISCSGATRAAPAYSISRYF. The Lipoyl-binding domain maps to 56 to 138; sequence VATIGITDHA…YEDGWMIKVK (83 aa). At Lys-97 the chain carries N6-lipoyllysine.

It belongs to the GcvH family. In terms of assembly, the glycine cleavage system is composed of four proteins: P, T, L and H. It depends on (R)-lipoate as a cofactor.

It is found in the mitochondrion. In terms of biological role, the glycine cleavage system catalyzes the degradation of glycine. The H protein shuttles the methylamine group of glycine from the P protein to the T protein. This chain is Glycine cleavage system H protein, mitochondrial (GDCSH), found in Oryza sativa subsp. indica (Rice).